The primary structure comprises 164 residues: Large ribosomal subunit protein uL10 (164 aa).

This sequence belongs to the universal ribosomal protein uL10 family. As to quaternary structure, part of the ribosomal stalk of the 50S ribosomal subunit. The N-terminus interacts with L11 and the large rRNA to form the base of the stalk. The C-terminus forms an elongated spine to which L12 dimers bind in a sequential fashion forming a multimeric L10(L12)X complex.

Its function is as follows. Forms part of the ribosomal stalk, playing a central role in the interaction of the ribosome with GTP-bound translation factors. The chain is Large ribosomal subunit protein uL10 from Pseudoalteromonas translucida (strain TAC 125).